A 277-amino-acid chain; its full sequence is Indole-3-glycerol phosphate synthase (277 aa).

The protein belongs to the TrpC family.

It catalyses the reaction 1-(2-carboxyphenylamino)-1-deoxy-D-ribulose 5-phosphate + H(+) = (1S,2R)-1-C-(indol-3-yl)glycerol 3-phosphate + CO2 + H2O. It participates in amino-acid biosynthesis; L-tryptophan biosynthesis; L-tryptophan from chorismate: step 4/5. This Pseudomonas putida (strain GB-1) protein is Indole-3-glycerol phosphate synthase.